The following is a 382-amino-acid chain: GDP-mannose 4,6 dehydratase 2 (382 aa).

NADP(+) contacts are provided by residues 40–45 (GITGQD), 97–98 (DM), 119–123 (LAAQS), and Tyr134. Thr166 is an active-site residue. Catalysis depends on nucleophile residues Glu168 and Tyr190. 3 residues coordinate NADP(+): Lys194, His220, and Arg225.

This sequence belongs to the NAD(P)-dependent epimerase/dehydratase family. GDP-mannose 4,6-dehydratase subfamily. The cofactor is NADP(+).

The enzyme catalyses GDP-alpha-D-mannose = GDP-4-dehydro-alpha-D-rhamnose + H2O. Its pathway is nucleotide-sugar biosynthesis; GDP-L-fucose biosynthesis via de novo pathway; GDP-L-fucose from GDP-alpha-D-mannose: step 1/2. Its function is as follows. Catalyzes the conversion of GDP-D-mannose to GDP-4-dehydro-6-deoxy-D-mannose. This is GDP-mannose 4,6 dehydratase 2 (gmd-2) from Caenorhabditis elegans.